We begin with the raw amino-acid sequence, 123 residues long: Large ribosomal subunit protein uL24 (123 aa).

The protein belongs to the universal ribosomal protein uL24 family. In terms of assembly, part of the 50S ribosomal subunit.

Functionally, one of two assembly initiator proteins, it binds directly to the 5'-end of the 23S rRNA, where it nucleates assembly of the 50S subunit. One of the proteins that surrounds the polypeptide exit tunnel on the outside of the subunit. This chain is Large ribosomal subunit protein uL24, found in Kineococcus radiotolerans (strain ATCC BAA-149 / DSM 14245 / SRS30216).